A 456-amino-acid polypeptide reads, in one-letter code: Bifunctional protein GlmU (456 aa).

Positions 1–229 are pyrophosphorylase; the sequence is MSNSSMSVVI…LSEVEGVNNR (229 aa). UDP-N-acetyl-alpha-D-glucosamine is bound by residues 11–14, Lys25, Gln76, 81–82, 103–105, Gly140, Glu154, Asn169, and Asn227; these read LAAG, GT, and YGD. Asp105 serves as a coordination point for Mg(2+). Residue Asn227 coordinates Mg(2+). The segment at 230–250 is linker; it reads LQLAALERVYQSEQAEKLLLA. Residues 251-456 form an N-acetyltransferase region; the sequence is GVMLLDPARF…QGWQRPIKKK (206 aa). The UDP-N-acetyl-alpha-D-glucosamine site is built by Arg333 and Lys351. His363 acts as the Proton acceptor in catalysis. Residues Tyr366 and Asn377 each coordinate UDP-N-acetyl-alpha-D-glucosamine. Acetyl-CoA is bound by residues Ala380, 386–387, Ser405, Ala423, and Arg440; that span reads NY.

This sequence in the N-terminal section; belongs to the N-acetylglucosamine-1-phosphate uridyltransferase family. It in the C-terminal section; belongs to the transferase hexapeptide repeat family. Homotrimer. Mg(2+) serves as cofactor.

It is found in the cytoplasm. It catalyses the reaction alpha-D-glucosamine 1-phosphate + acetyl-CoA = N-acetyl-alpha-D-glucosamine 1-phosphate + CoA + H(+). It carries out the reaction N-acetyl-alpha-D-glucosamine 1-phosphate + UTP + H(+) = UDP-N-acetyl-alpha-D-glucosamine + diphosphate. The protein operates within nucleotide-sugar biosynthesis; UDP-N-acetyl-alpha-D-glucosamine biosynthesis; N-acetyl-alpha-D-glucosamine 1-phosphate from alpha-D-glucosamine 6-phosphate (route II): step 2/2. It functions in the pathway nucleotide-sugar biosynthesis; UDP-N-acetyl-alpha-D-glucosamine biosynthesis; UDP-N-acetyl-alpha-D-glucosamine from N-acetyl-alpha-D-glucosamine 1-phosphate: step 1/1. Its pathway is bacterial outer membrane biogenesis; LPS lipid A biosynthesis. Its function is as follows. Catalyzes the last two sequential reactions in the de novo biosynthetic pathway for UDP-N-acetylglucosamine (UDP-GlcNAc). The C-terminal domain catalyzes the transfer of acetyl group from acetyl coenzyme A to glucosamine-1-phosphate (GlcN-1-P) to produce N-acetylglucosamine-1-phosphate (GlcNAc-1-P), which is converted into UDP-GlcNAc by the transfer of uridine 5-monophosphate (from uridine 5-triphosphate), a reaction catalyzed by the N-terminal domain. The chain is Bifunctional protein GlmU from Yersinia enterocolitica serotype O:8 / biotype 1B (strain NCTC 13174 / 8081).